The primary structure comprises 87 residues: Antitoxin YefM (87 aa).

Belongs to the phD/YefM antitoxin family. Forms a complex with YoeB which inhibits its toxin activity.

In terms of biological role, antitoxin component of a type II toxin-antitoxin (TA) system. A probable antitoxin for the putative mRNA interferase YeoB. The chain is Antitoxin YefM from Streptomyces coelicolor (strain ATCC BAA-471 / A3(2) / M145).